The chain runs to 185 residues: Intraflagellar transport protein 22 homolog (185 aa).

Residues 10–17 (GPCESGKT), 63–67 (DCGGD), and 123–126 (HKPG) contribute to the GTP site. At S137 the chain carries Phosphoserine.

It belongs to the small GTPase superfamily. Rab family. In terms of assembly, component of the IFT complex B, at least composed of IFT20, IFT22, IFT25, IFT27, IFT46, IFT52, TRAF3IP1/IFT54, IFT57, IFT74, IFT80, IFT81, and IFT88. Interacts with IFT88. Interacts with CFAP61.

The protein localises to the cell projection. It is found in the cilium. Functionally, small GTPase-like component of the intraflagellar transport (IFT) complex B. This chain is Intraflagellar transport protein 22 homolog (IFT22), found in Homo sapiens (Human).